The primary structure comprises 1468 residues: MSELFKKLMDQIEMPLEIKNSSVFSSADIIEVKVHSLSRLWEFHFSFPELLPIEVYRELQTRLVNSFEKADIKATFDIRAETIDFSDDLLQDYYQQAFCEPLCNSASFKSSFSQLKVHYNGSQMIISAPQFVNNNHFRQNHLPRLEQQFSLFGFGKLAIDMVSDEQMTQDLKSSFETNREQLLEKANQEAMQALEAQKSLEDSAPPSEEVTPTQNYDFKERIKQRQAGFEKAEITPMIEVTTEENRIVFEGMVFSVERKTTRTGRHIINFKMTDYTSSFAMQKWAKDDEELKKYDMISKGSWLRVRGNIENNNFTKSLTMNVQDIKEIVHHERKDLMPADQKRVEFHAHTNMSTMDALPTVESLIDTAAKWGHPAIAITDHANVQSFPHGYHRAKKAGIKAIFGLEANIVEDKVPISYNEVDMNLHEATYVVFDVETTGLSAANNDLIQIAASKMFKGNIIEQFDEFIDPGHPLSAFTTELTGITDNHVRGSKPILQVLQEFQNFCQGTVLVAHNATFDVGFMNANYERHNLPLITQPVIDTLEFARNLYPEYKRHGLGPLTKRFQVALEHHHMANYDAEATGRLLFIFLKEARENRDVTNLMELNTKLVAEDSYKKARIKHATIYVQNQVGLKNIFKLVSLSNVKYFEGVARIPRSVLDAHREGLLLGTACSDGEVFDALLSNGIDAAVTLAKYYDFIEVMPPAIYRPLVVRDLIKDEVGIQQIIRDLIEVGRRLDKPVLATGNVHYIEPEDEIYREIIVRSLGQGAMINRTIGRGEDAQPAPLPKAHFRTTNEMLDEFAFLGKDLAYEIVVTNTNTFADRFEDVEVVKGDLYTPFVDRAEERVAELTYAKAFEIYGNPLPDIIDLRIEKELASILGNGFAVIYLASQMLVQRSNERGYLVGSRGSVGSSFVATMIGITEVNPMPPHYVCPNCQHSEFITDGSCGSGYDLPNKNCPKCGTLYKKDGQDIPFETFLGFDGDKVPDIDLNFSGDDQPSAHLDVRDIFGEEYAFRAGTVGTVAEKTAFGFVKGYERDYNKFYNDAEVERLATGAAGVKRSTGQHPGGIVVIPNYMDVYDFTPVQYPADDMTAAWQTTHFNFHDIDENVLKLDILGHDDPTMIRKLQDLSGIDPSNILPDDPDVMKLFSGTEVLGVTEEQIGTPTGMLGIPEFGTNFVRGMVNETHPTTFAELLQLSGLSHGTDVWLGNAQDLIKEGIATLSTVIGCRDDIMVYLMHAGLQPKMAFTIMERVRKGLWLKISEDERNGYIQAMRDNNVPDWYIESCGKIKYMFPKAHAAAYVLMALRVAYFKVHYPIFYYCAYFSIRAKAFELRTMSAGLDAVKARMKDITEKRQRNEATNVENDLFTTLELVNEMLERGFKFGKLDLYRSHATDFIIEEDTLIPPFVAMEGLGENVAKQIVRAREDGEFLSKTELRKRGGVSSTLVEKFDEMGILGNLPEDNQLSLFDDFF.

A disordered region spans residues 197-217; it reads QKSLEDSAPPSEEVTPTQNYD. Residues 430–586 enclose the Exonuclease domain; it reads YVVFDVETTG…YDAEATGRLL (157 aa).

It belongs to the DNA polymerase type-C family. PolC subfamily.

The protein resides in the cytoplasm. The catalysed reaction is DNA(n) + a 2'-deoxyribonucleoside 5'-triphosphate = DNA(n+1) + diphosphate. Functionally, required for replicative DNA synthesis. This DNA polymerase also exhibits 3' to 5' exonuclease activity. This Streptococcus agalactiae serotype III (strain NEM316) protein is DNA polymerase III PolC-type.